A 316-amino-acid chain; its full sequence is Transcription initiation factor IIB (316 aa).

Residues 11–42 (PRVTCPNHPDAILVEDYRAGDMICPECGLVVG) form a TFIIB-type zinc finger. The Zn(2+) site is built by cysteine 15, histidine 18, cysteine 34, and cysteine 37. Serine 70, serine 76, and serine 92 each carry phosphoserine. 2 repeat units span residues 124 to 200 (MADR…LILK) and 218 to 294 (FCSN…LIYP). DNA-binding residues include lysine 152, arginine 154, lysine 189, and lysine 196. Residues 189–193 (KEIGR) are core promoter DNA-binding. Lysine 238 bears the N6-acetyllysine; by autocatalysis mark. Residues 244-316 (LVPGRSPISV…DTPVDKLPQL (73 aa)) are necessary for TATA box-bound TBP complex formation. Arginine 248 is a DNA binding site. The interval 249–252 (SPIS) is core promoter DNA-binding. The DNA site is built by lysine 272, alanine 281, threonine 284, arginine 286, and arginine 290. Residues 283 to 286 (VTIR) are core promoter DNA-binding.

It belongs to the TFIIB family. In terms of assembly, found in a ternary complex with TATA box-bound TBP. Part of a TFIID-containing RNA polymerase II pre-initiation complex (PIC) that is composed of TBP and at least GTF2A1, GTF2A2, GTF2E1, GTF2E2, GTF2F1, GTF2H2, GTF2H3, GTF2H4, GTF2H5, GTF2B, TCEA1, ERCC2, ERCC3, TAF1, TAF2, TAF3, TAF4, TAF5, TAF6, TAF7, TAF8, TAF9, TAF10, TAF11, TAF12 and TAF13. Associates with TFIID-TFIIA (DA complex) to form TFIID-TFIIA-TFIIB (DAB complex), which is then recognized by RNA polymerase II (Pol II). Found in a RNA polymerase II initiation complex. Interacts (via C-terminus) with TBP; this interaction with TATA box-bound TBP guides Pol II into the PIC. Interacts (via N-terminus) with Pol II. Interacts (via C-terminus) with SSU72; this interaction is inhibited by SYMPK. Interacts with NR2F1; this interaction is direct. Interacts with PGR. Interacts with ESR1. Interacts with GTF2F1 (via C-terminus and preferentially via acetylated form); this interaction prevents binding of GTF2B to GTF2F2. Interacts with GTF2F2 (via N-terminus); this interaction is inhibited in presence of GTF2F1. Interacts with the transcription elongation factor TCEA2. Interacts with HSF1 (via transactivation domain). Interacts with GPBP1. Post-translationally, acetylated. Autoacetylated; autoacetylation at Lys-238 stimulates transcription activation.

Its subcellular location is the nucleus. The protein localises to the chromosome. It catalyses the reaction L-lysyl-[protein] + acetyl-CoA = N(6)-acetyl-L-lysyl-[protein] + CoA + H(+). In terms of biological role, general transcription factor that plays a role in transcription initiation by RNA polymerase II (Pol II). Involved in the pre-initiation complex (PIC) formation and Pol II recruitment at promoter DNA. Together with the TATA box-bound TBP forms the core initiation complex and provides a bridge between TBP and the Pol II-TFIIF complex. Released from the PIC early following the onset of transcription during the initiation and elongation transition and reassociates with TBP during the next transcription cycle. Associates with chromatin to core promoter-specific regions. Binds to two distinct DNA core promoter consensus sequence elements in a TBP-independent manner; these IIB-recognition elements (BREs) are localized immediately upstream (BREu), 5'-[GC][GC][GA]CGCC-3', and downstream (BREd), 5'-[GA]T[TGA][TG][GT][TG][TG]-3', of the TATA box element. Modulates transcription start site selection. Also exhibits autoacetyltransferase activity that contributes to the activated transcription. The chain is Transcription initiation factor IIB from Mus musculus (Mouse).